Reading from the N-terminus, the 195-residue chain is MRQADVTRNTSETKIQISINLDGTGKAELASGVPFLDHMLDQIARHGMIDLKVVAQGDTHIDDHHTVEDVGITLGQAFAKAVGDKAGITRYGHSYVPLDETLSRVVVDFSGRPGLEFNVPFTRARVGDFDVDLSIEFFRGFVNHAGVTLHIDNLRGINAHHQIETVFKAFGRALRMALTVDPRAAGVVPSTKGSL.

The protein belongs to the imidazoleglycerol-phosphate dehydratase family.

It is found in the cytoplasm. The enzyme catalyses D-erythro-1-(imidazol-4-yl)glycerol 3-phosphate = 3-(imidazol-4-yl)-2-oxopropyl phosphate + H2O. Its pathway is amino-acid biosynthesis; L-histidine biosynthesis; L-histidine from 5-phospho-alpha-D-ribose 1-diphosphate: step 6/9. In Polynucleobacter asymbioticus (strain DSM 18221 / CIP 109841 / QLW-P1DMWA-1) (Polynucleobacter necessarius subsp. asymbioticus), this protein is Imidazoleglycerol-phosphate dehydratase.